Consider the following 539-residue polypeptide: Glycerophosphoinositol inositolphosphodiesterase GDPD2 (539 aa).

The Cytoplasmic segment spans residues 1–38 (MAESPGCCSVWARCLHCLYSCHWRKCPRERMQTSKCDC). The helical transmembrane segment at 39–59 (IWFGLLFLTFLLSLSWLYIGL) threads the bilayer. Topologically, residues 60–85 (VLLNDLHNFNEFLFRRWGHWMDWSLA) are extracellular. Residues 86–106 (FLLVISLLVTYASLLLVLALL) form a helical membrane-spanning segment. The Cytoplasmic portion of the chain corresponds to 107-121 (LRLCRQPLHLHSLHK). A helical transmembrane segment spans residues 122–142 (VLLLLIMLLVAAGLVGLDIQW). Over 143–154 (QQEWHSLRVSLQ) the chain is Extracellular. A helical membrane pass occupies residues 155-175 (ATAPFLHIGAAAGIALLAWPV). The Cytoplasmic portion of the chain corresponds to 176 to 188 (ADTFYRIHRRGPK). The chain crosses the membrane as a helical span at residues 189–209 (ILLLLLFFGVVLVIYLAPLCI). The Extracellular portion of the chain corresponds to 210–490 (SSPCIMEPRD…PIWLITPQTY (281 aa)). Residues 224 to 479 (PGLVGHRGAP…NDCQLLQQMR (256 aa)) enclose the GP-PDE domain. Glu-256, Asp-258, and His-271 together coordinate a divalent metal cation. A glycan (N-linked (GlcNAc...) asparagine) is linked at Asn-442. The helical transmembrane segment at 491–511 (LIIWVITNCVSTMLLLWTFLL) threads the bilayer. The Cytoplasmic portion of the chain corresponds to 512–539 (QRRFVKKRGKTGLETAVLLTRINNFMME).

The protein belongs to the glycerophosphoryl diester phosphodiesterase family. The cofactor is Ca(2+).

The protein localises to the cell membrane. Its subcellular location is the cytoplasm. It is found in the cytoskeleton. The catalysed reaction is sn-glycero-3-phospho-1D-myo-inositol + H2O = 1D-myo-inositol 1-phosphate + glycerol + H(+). Its function is as follows. Has glycerophosphoinositol inositolphosphodiesterase activity and specifically hydrolyzes glycerophosphoinositol, with no activity for other substrates such as glycerophosphoinositol 4-phosphate, glycerophosphocholine, glycerophosphoethanolamine, and glycerophosphoserine. Accelerates the program of osteoblast differentiation and growth. May play a role in remodeling of the actin cytoskeleton. The polypeptide is Glycerophosphoinositol inositolphosphodiesterase GDPD2 (GDPD2) (Homo sapiens (Human)).